The chain runs to 347 residues: Phenylalanine--tRNA ligase alpha subunit (347 aa).

Position 261 (Glu-261) interacts with Mg(2+).

The protein belongs to the class-II aminoacyl-tRNA synthetase family. Phe-tRNA synthetase alpha subunit type 1 subfamily. Tetramer of two alpha and two beta subunits. Requires Mg(2+) as cofactor.

It localises to the cytoplasm. It carries out the reaction tRNA(Phe) + L-phenylalanine + ATP = L-phenylalanyl-tRNA(Phe) + AMP + diphosphate + H(+). The protein is Phenylalanine--tRNA ligase alpha subunit of Streptococcus thermophilus (strain CNRZ 1066).